The chain runs to 518 residues: Probable alginate O-acetylase AlgI (518 aa).

8 helical membrane-spanning segments follow: residues 2 to 24 (VFSS…YLSG), 39 to 61 (FYAW…NYWI), 78 to 100 (WLLL…NFGV), 115 to 137 (FILT…ISYI), 150 to 172 (NLID…VLRF), 319 to 341 (GLWH…WLAI), 354 to 373 (FNVI…WVIF), and 402 to 424 (ASLT…FFGL). The active site involves histidine 322. The segment at 435 to 456 (SGKSARADGPATEQPGTIKAVP) is disordered. The helical transmembrane segment at 493–515 (LILLLFVASILKLSAQSFSPFLY) threads the bilayer.

It belongs to the membrane-bound acyltransferase family.

It is found in the cell inner membrane. Its pathway is glycan biosynthesis; alginate biosynthesis. Functionally, together with AlgJ and AlgF, forms an inner membrane complex which probably interacts with the alginate polymerization-transport complex and adds acetyl groups at the O-2 and O-3 positions of mannuronate residues. Acetylation of alginate is important for the architecture of biofilms and increases the ability of alginate to act as a defense barrier. The protein is Probable alginate O-acetylase AlgI (algI) of Pseudomonas syringae pv. tomato (strain ATCC BAA-871 / DC3000).